Here is a 335-residue protein sequence, read N- to C-terminus: Fructose-1,6-bisphosphatase class 1 (335 aa).

Mg(2+) is bound by residues Glu-94, Asp-113, Leu-115, and Asp-116. Substrate contacts are provided by residues 116-119 (DGSS), Asn-208, and Lys-274. Glu-280 provides a ligand contact to Mg(2+).

This sequence belongs to the FBPase class 1 family. As to quaternary structure, homotetramer. Mg(2+) serves as cofactor.

Its subcellular location is the cytoplasm. It carries out the reaction beta-D-fructose 1,6-bisphosphate + H2O = beta-D-fructose 6-phosphate + phosphate. It participates in carbohydrate biosynthesis; gluconeogenesis. This chain is Fructose-1,6-bisphosphatase class 1, found in Polynucleobacter asymbioticus (strain DSM 18221 / CIP 109841 / QLW-P1DMWA-1) (Polynucleobacter necessarius subsp. asymbioticus).